Consider the following 249-residue polypeptide: Proteasome subunit alpha (249 aa).

This sequence belongs to the peptidase T1A family. The 20S proteasome core is composed of 14 alpha and 14 beta subunits that assemble into four stacked heptameric rings, resulting in a barrel-shaped structure. The two inner rings, each composed of seven catalytic beta subunits, are sandwiched by two outer rings, each composed of seven alpha subunits. The catalytic chamber with the active sites is on the inside of the barrel. Has a gated structure, the ends of the cylinder being occluded by the N-termini of the alpha-subunits. Is capped at one or both ends by the proteasome regulatory ATPase, PAN.

The protein resides in the cytoplasm. The formation of the proteasomal ATPase PAN-20S proteasome complex, via the docking of the C-termini of PAN into the intersubunit pockets in the alpha-rings, triggers opening of the gate for substrate entry. Interconversion between the open-gate and close-gate conformations leads to a dynamic regulation of the 20S proteasome proteolysis activity. Its function is as follows. Component of the proteasome core, a large protease complex with broad specificity involved in protein degradation. The polypeptide is Proteasome subunit alpha (Methanosarcina mazei (strain ATCC BAA-159 / DSM 3647 / Goe1 / Go1 / JCM 11833 / OCM 88) (Methanosarcina frisia)).